A 198-amino-acid chain; its full sequence is dITP/XTP pyrophosphatase (198 aa).

Residue Thr7–Lys12 coordinates substrate. Mg(2+) is bound by residues Glu40 and Asp69. Catalysis depends on Asp69, which acts as the Proton acceptor. Substrate-binding positions include Ser70, Phe152–Asp155, Lys175, and His180–Arg181.

It belongs to the HAM1 NTPase family. In terms of assembly, homodimer. It depends on Mg(2+) as a cofactor.

The enzyme catalyses XTP + H2O = XMP + diphosphate + H(+). The catalysed reaction is dITP + H2O = dIMP + diphosphate + H(+). It catalyses the reaction ITP + H2O = IMP + diphosphate + H(+). In terms of biological role, pyrophosphatase that catalyzes the hydrolysis of nucleoside triphosphates to their monophosphate derivatives, with a high preference for the non-canonical purine nucleotides XTP (xanthosine triphosphate), dITP (deoxyinosine triphosphate) and ITP. Seems to function as a house-cleaning enzyme that removes non-canonical purine nucleotides from the nucleotide pool, thus preventing their incorporation into DNA/RNA and avoiding chromosomal lesions. This Exiguobacterium sibiricum (strain DSM 17290 / CCUG 55495 / CIP 109462 / JCM 13490 / 255-15) protein is dITP/XTP pyrophosphatase.